The following is a 505-amino-acid chain: Light-independent protochlorophyllide reductase subunit B (505 aa).

Aspartate 36 lines the [4Fe-4S] cluster pocket. The active-site Proton donor is aspartate 291. Position 426–427 (426–427 (GM)) interacts with substrate.

Belongs to the ChlB/BchB/BchZ family. In terms of assembly, protochlorophyllide reductase is composed of three subunits; ChlL, ChlN and ChlB. Forms a heterotetramer of two ChlB and two ChlN subunits. [4Fe-4S] cluster is required as a cofactor.

The catalysed reaction is chlorophyllide a + oxidized 2[4Fe-4S]-[ferredoxin] + 2 ADP + 2 phosphate = protochlorophyllide a + reduced 2[4Fe-4S]-[ferredoxin] + 2 ATP + 2 H2O. It participates in porphyrin-containing compound metabolism; chlorophyll biosynthesis (light-independent). In terms of biological role, component of the dark-operative protochlorophyllide reductase (DPOR) that uses Mg-ATP and reduced ferredoxin to reduce ring D of protochlorophyllide (Pchlide) to form chlorophyllide a (Chlide). This reaction is light-independent. The NB-protein (ChlN-ChlB) is the catalytic component of the complex. The protein is Light-independent protochlorophyllide reductase subunit B of Gloeobacter violaceus (strain ATCC 29082 / PCC 7421).